The following is a 318-amino-acid chain: Methionyl-tRNA formyltransferase (318 aa).

110–113 (SLLP) contributes to the (6S)-5,6,7,8-tetrahydrofolate binding site.

This sequence belongs to the Fmt family.

The catalysed reaction is L-methionyl-tRNA(fMet) + (6R)-10-formyltetrahydrofolate = N-formyl-L-methionyl-tRNA(fMet) + (6S)-5,6,7,8-tetrahydrofolate + H(+). Functionally, attaches a formyl group to the free amino group of methionyl-tRNA(fMet). The formyl group appears to play a dual role in the initiator identity of N-formylmethionyl-tRNA by promoting its recognition by IF2 and preventing the misappropriation of this tRNA by the elongation apparatus. This chain is Methionyl-tRNA formyltransferase, found in Lacticaseibacillus paracasei (strain ATCC 334 / BCRC 17002 / CCUG 31169 / CIP 107868 / KCTC 3260 / NRRL B-441) (Lactobacillus paracasei).